We begin with the raw amino-acid sequence, 810 residues long: DNA replication licensing factor mcm-6 (810 aa).

The 208-residue stretch at 346–553 (IEKNIVDSLF…VTDYAIARRI (208 aa)) folds into the MCM domain. Positions 400, 401, 402, 403, 404, and 505 each coordinate ATP. Residues 529–532 (SRFD) carry the Arginine finger motif. ADP-binding residues include Arg622 and Glu625. The tract at residues 685–705 (KENQGGDDDMEHDGEKDETAK) is disordered.

This sequence belongs to the MCM family. In terms of assembly, component of the mcm2-7 complex. The complex forms a toroidal hexameric ring with the proposed subunit order mcm2-mcm6-mcm4-mcm7-mcm3-mcm5 (By simililarity).

It is found in the nucleus. The catalysed reaction is ATP + H2O = ADP + phosphate + H(+). Acts as a component of the MCM2-7 complex (MCM complex) which is the replicative helicase essential for 'once per cell cycle' DNA replication initiation and elongation in eukaryotic cells. Core component of CDC45-MCM-GINS (CMG) helicase, the molecular machine that unwinds template DNA during replication, and around which the replisome is built. The active ATPase sites in the MCM2-7 ring are formed through the interaction surfaces of two neighboring subunits such that a critical structure of a conserved arginine finger motif is provided in trans relative to the ATP-binding site of the Walker A box of the adjacent subunit. The six ATPase active sites, however, are likely to contribute differentially to the complex helicase activity. The sequence is that of DNA replication licensing factor mcm-6 from Caenorhabditis briggsae.